A 213-amino-acid polypeptide reads, in one-letter code: MKPYQRQFIEFALSKQVLKFGEFTLKSGRKSPYFFNAGLFNTGRDLALLGRFYAEALVDSGIEFDLLFGPAYKGIPIATTTAVALAEHHDRDLPYCFNRKEAKNHGEGGNLVGSPLQGRVMLVDDVITAGTAIRESMEIIQAQGALLAGVLISLDRQERGRGEISAIQEVERDYGCQVISIITLKELIAYLEEKPEMAEHLASVRAYREAYGV.

Residue lysine 26 coordinates 5-phospho-alpha-D-ribose 1-diphosphate. Residue 34-35 (FF) coordinates orotate. Residues 72 to 73 (YK), arginine 99, lysine 100, lysine 103, histidine 105, and 124 to 132 (DDVITAGTA) each bind 5-phospho-alpha-D-ribose 1-diphosphate. Threonine 128 and arginine 156 together coordinate orotate.

It belongs to the purine/pyrimidine phosphoribosyltransferase family. PyrE subfamily. Homodimer. It depends on Mg(2+) as a cofactor.

The enzyme catalyses orotidine 5'-phosphate + diphosphate = orotate + 5-phospho-alpha-D-ribose 1-diphosphate. It participates in pyrimidine metabolism; UMP biosynthesis via de novo pathway; UMP from orotate: step 1/2. Its function is as follows. Catalyzes the transfer of a ribosyl phosphate group from 5-phosphoribose 1-diphosphate to orotate, leading to the formation of orotidine monophosphate (OMP). This chain is Orotate phosphoribosyltransferase, found in Klebsiella pneumoniae subsp. pneumoniae (strain ATCC 700721 / MGH 78578).